The chain runs to 350 residues: Probable arabinogalactan endo-beta-1,4-galactanase A (350 aa).

A signal peptide spans 1–16; sequence MIYPLLLSALPLLSSA. Residue Asn-128 is glycosylated (N-linked (GlcNAc...) asparagine). The Proton donor role is filled by Glu-152. Glu-262 functions as the Nucleophile in the catalytic mechanism.

Belongs to the glycosyl hydrolase 53 family.

The protein resides in the secreted. It carries out the reaction The enzyme specifically hydrolyzes (1-&gt;4)-beta-D-galactosidic linkages in type I arabinogalactans.. Endogalactanase involved in the degradation of plant cell wall polysaccharides, and more particularly of hairy regions of pectin. The protein is Probable arabinogalactan endo-beta-1,4-galactanase A (galA) of Aspergillus tubingensis.